The primary structure comprises 451 residues: Phosphoglucosamine mutase (451 aa).

Residue serine 107 is the Phosphoserine intermediate of the active site. Residues serine 107, aspartate 246, aspartate 248, and aspartate 250 each coordinate Mg(2+). Serine 107 carries the post-translational modification Phosphoserine.

The protein belongs to the phosphohexose mutase family. It depends on Mg(2+) as a cofactor. Post-translationally, activated by phosphorylation.

It carries out the reaction alpha-D-glucosamine 1-phosphate = D-glucosamine 6-phosphate. Catalyzes the conversion of glucosamine-6-phosphate to glucosamine-1-phosphate. The protein is Phosphoglucosamine mutase of Burkholderia ambifaria (strain MC40-6).